A 476-amino-acid chain; its full sequence is Transmembrane transporter FPSE_08127 (476 aa).

A helical transmembrane segment spans residues 72–92 (ILAIPAALGALGSIGGSLCII). Residue Asn-111 is glycosylated (N-linked (GlcNAc...) asparagine). Transmembrane regions (helical) follow at residues 133-153 (LVGV…VVAI), 164-184 (GTCT…FSAI), 192-212 (WLTW…VVAV), 231-251 (WAPI…NIFI), 275-295 (ACLV…LVIY), 317-337 (VAYG…QHVA), 364-384 (LGIN…VPIL), 387-407 (LLGL…PALL), and 431-451 (LIMM…VVLI).

The protein belongs to the amino acid/polyamine transporter 2 family.

The protein localises to the membrane. Transmembrane transporter; part of the Fusarium detoxification of benzoxazolinone cluster involved in the degradation of benzoxazolinones produced by the host plant. Maize, wheat, and rye produce the 2 benzoxazinone phytoanticipins 2,4-dihy-droxy-7-methoxy-1,4-benzoxazin-3-one (DIMBOA) and 2,4-dihydroxy-1,4-benzoxazin-3-one (DIBOA) that, due to their inherent instability once released, spontaneously degrade to the more stable corresponding benzoxazolinones, 6-methoxy-2-benzoxazolinone (MBOA) and 2-benzoxazolinone (BOA), respectively. FPSE_08127 is proposed to shuttle metabolites of benzoxazolinone degradation. In Fusarium pseudograminearum (strain CS3096) (Wheat and barley crown-rot fungus), this protein is Transmembrane transporter FPSE_08127.